The sequence spans 359 residues: Peptide chain release factor 1 (359 aa).

An N5-methylglutamine modification is found at glutamine 235.

This sequence belongs to the prokaryotic/mitochondrial release factor family. Post-translationally, methylated by PrmC. Methylation increases the termination efficiency of RF1.

Its subcellular location is the cytoplasm. Its function is as follows. Peptide chain release factor 1 directs the termination of translation in response to the peptide chain termination codons UAG and UAA. The polypeptide is Peptide chain release factor 1 (Nitrosomonas eutropha (strain DSM 101675 / C91 / Nm57)).